The primary structure comprises 1742 residues: Kinase non-catalytic C-lobe domain-containing protein 1 (1742 aa).

The 181-residue stretch at 37 to 217 (VSLADILSLR…QELSENTWRG (181 aa)) folds into the KIND 1 domain. 2 disordered regions span residues 215 to 288 (WRGR…EGLA) and 365 to 455 (FKTQ…TEQS). A Phosphoserine modification is found at S267. The segment covering 403–412 (LEASSPSQGS) has biased composition (polar residues). Residues 426 to 445 (DSDHEGHIPRSEEKIPEESR) are compositionally biased toward basic and acidic residues. A KIND 2 domain is found at 456–620 (LSLKDLLSKL…RASTCKVHPE (165 aa)). Disordered regions lie at residues 703–727 (DQLA…REGT), 744–876 (SNQL…KMTA), 948–1006 (GPAS…LSDI), and 1028–1076 (VTRE…ASDF). Basic and acidic residues predominate over residues 711-727 (SNEKPKEGSGHLDREGT). Residues 755–771 (GATPDPDGDSGSPSSAT) show a composition bias toward low complexity. Positions 782–791 (VTQQKGTSGT) are enriched in polar residues. Over residues 847 to 861 (SDGHPEKPRPADRKL) the composition is skewed to basic and acidic residues. Residues 949–965 (PASPSESTSEEPGSQPE) show a composition bias toward low complexity. The residue at position 951 (S951) is a Phosphoserine. Residues 1043-1053 (GPSQDSTSHAS) are compositionally biased toward polar residues. Residues 1112-1177 (HTELEAQSPE…EMKSKVQFLS (66 aa)) adopt a coiled-coil conformation. Residues 1239-1367 (KARILQAGTP…ALLEVGTERR (129 aa)) enclose the N-terminal Ras-GEF domain. The 252-residue stretch at 1461-1712 (STNQLFTQLT…SGADVSILAA (252 aa)) folds into the Ras-GEF domain.

In terms of assembly, interacts (via KIND2) with MAP2; the interaction enhances MAP2 phosphorylation and localizes KNDC1 to dendrites. Highly expressed in the brain and at low levels in the ovary. In the brain it is most prominently expressed in the cerebellum where it is restricted to the granular Purkinje cell layer.

Its subcellular location is the cell projection. The protein resides in the dendrite. It is found in the perikaryon. RAS-Guanine nucleotide exchange factor (GEF) that controls the negative regulation of neuronal dendrite growth by mediating a signaling pathway linking RAS and MAP2. May be involved in cellular senescence. The chain is Kinase non-catalytic C-lobe domain-containing protein 1 from Mus musculus (Mouse).